The following is a 215-amino-acid chain: LysM and putative peptidoglycan-binding domain-containing protein 2 (215 aa).

Residues 1–40 (MADLSPAPALREGGPRAHRPSAPSPPPRSRSTSEPEEAEL) are disordered. A2 is subject to N-acetylalanine. Residues S5, S24, S33, and S57 each carry the phosphoserine modification. One can recognise a LysM domain in the interval 71–115 (VEHRVRAGDTLQGIALKYGVTMEQIKRANKLFTNDCIFLKKTLSI). Disordered stretches follow at residues 135–176 (ESET…EVSA) and 195–215 (RKLK…LYHS). The span at 145–156 (QEEEPVVSEEEL) shows a compositional bias: acidic residues. Positions 157–169 (PPPSPQDPDPKPA) are enriched in pro residues. A compositionally biased stretch (basic and acidic residues) spans 196 to 205 (KLKEESRDEE).

In Mus musculus (Mouse), this protein is LysM and putative peptidoglycan-binding domain-containing protein 2 (Lysmd2).